The following is a 294-amino-acid chain: tRNA pseudouridine synthase B (294 aa).

The Nucleophile role is filled by Asp40.

It belongs to the pseudouridine synthase TruB family. Type 1 subfamily.

It carries out the reaction uridine(55) in tRNA = pseudouridine(55) in tRNA. Its function is as follows. Responsible for synthesis of pseudouridine from uracil-55 in the psi GC loop of transfer RNAs. The protein is tRNA pseudouridine synthase B of Synechococcus elongatus (strain ATCC 33912 / PCC 7942 / FACHB-805) (Anacystis nidulans R2).